Here is a 111-residue protein sequence, read N- to C-terminus: Small ribosomal subunit protein bS16 (111 aa).

This sequence belongs to the bacterial ribosomal protein bS16 family.

The sequence is that of Small ribosomal subunit protein bS16 from Rickettsia bellii (strain OSU 85-389).